The primary structure comprises 387 residues: Xylose isomerase (387 aa).

Catalysis depends on residues His53 and Asp56. Mg(2+) is bound by residues Glu180, Glu216, His219, Asp244, Asp254, Asp256, and Asp286.

The protein belongs to the xylose isomerase family. In terms of assembly, homotetramer. It depends on Mg(2+) as a cofactor.

Its subcellular location is the cytoplasm. The enzyme catalyses alpha-D-xylose = alpha-D-xylulofuranose. The polypeptide is Xylose isomerase (xylA) (Thermus thermophilus (strain ATCC 27634 / DSM 579 / HB8)).